The chain runs to 153 residues: Interleukin-4 (153 aa).

The signal sequence occupies residues 1–24 (MGLTSQLLPPLFFLLACAGNFVHG). 3 disulfide bridges follow: Cys27–Cys151, Cys48–Cys89, and Cys70–Cys123. N-linked (GlcNAc...) asparagine glycosylation occurs at Asn62.

It belongs to the IL-4/IL-13 family.

The protein resides in the secreted. Participates in at least several B-cell activation processes as well as of other cell types. It is a costimulator of DNA-synthesis. It induces the expression of class II MHC molecules on resting B-cells. It enhances both secretion and cell surface expression of IgE and IgG1. It also regulates the expression of the low affinity Fc receptor for IgE (CD23) on both lymphocytes and monocytes. Positively regulates IL31RA expression in macrophages. Stimulates autophagy in dendritic cells by interfering with mTORC1 signaling and through the induction of RUFY4. The polypeptide is Interleukin-4 (IL4) (Macaca fascicularis (Crab-eating macaque)).